A 554-amino-acid polypeptide reads, in one-letter code: Hydroxylamine reductase (554 aa).

Residues cysteine 3, cysteine 6, cysteine 18, and cysteine 25 each coordinate [2Fe-2S] cluster. Residues histidine 252, glutamate 276, cysteine 320, cysteine 408, cysteine 436, cysteine 461, glutamate 495, and lysine 497 each coordinate hybrid [4Fe-2O-2S] cluster. Cysteine 408 bears the Cysteine persulfide mark.

This sequence belongs to the HCP family. The cofactor is [2Fe-2S] cluster. It depends on hybrid [4Fe-2O-2S] cluster as a cofactor.

It localises to the cytoplasm. The enzyme catalyses A + NH4(+) + H2O = hydroxylamine + AH2 + H(+). Functionally, catalyzes the reduction of hydroxylamine to form NH(3) and H(2)O. In Shewanella sp. (strain MR-4), this protein is Hydroxylamine reductase.